Here is a 255-residue protein sequence, read N- to C-terminus: Small ribosomal subunit protein uS2 (255 aa).

Belongs to the universal ribosomal protein uS2 family.

This is Small ribosomal subunit protein uS2 (rpsB) from Streptococcus pyogenes serotype M1.